A 378-amino-acid polypeptide reads, in one-letter code: Sphingosine 1-phosphate receptor 3 (378 aa).

Residues 1–40 (MATALPPRLQPVRGNETLREHYQYVGKLAGRLKEASEGST) are Extracellular-facing. The N-linked (GlcNAc...) asparagine glycan is linked to Asn15. A helical transmembrane segment spans residues 41–65 (LTTVLFLVICSFIVLENLMVLIAIW). Residues 66–72 (KNNKFHN) lie on the Cytoplasmic side of the membrane. Residues 73 to 101 (RMYFFIGNLALCDLLAGIAYKVNILMSGK) form a helical membrane-spanning segment. Topologically, residues 102 to 115 (KTFSLSPTVWFLRE) are extracellular. A helical membrane pass occupies residues 116 to 134 (GSMFVALGASTCSLLAIAI). The Cytoplasmic segment spans residues 135–153 (ERHLTMIKMRPYDANKRHR). The helical transmembrane segment at 154-179 (VFLLIGMCWLIAFTLGALPILGWNCL) threads the bilayer. Topologically, residues 180 to 195 (HNLPDCSTILPLYSKK) are extracellular. The chain crosses the membrane as a helical span at residues 196-216 (YIAFCISIFTAILVTIVILYA). Residues 217 to 243 (RIYFLVKSSSRKVANHNNSERSMALLR) are Cytoplasmic-facing. A helical transmembrane segment spans residues 244–265 (TVVIVVSVFIACWSPLFILFLI). At 266-281 (DVACRVQACPILFKAQ) the chain is on the extracellular side. A helical transmembrane segment spans residues 282 to 302 (WFIVLAVLNSAMNPVIYTLAS). Residues 303–378 (KEMRRAFFRL…AALQNGIFCN (76 aa)) lie on the Cytoplasmic side of the membrane. Position 326 is a phosphoserine (Ser326). The tract at residues 327 to 357 (PIQPALDPSRSKSSSSNNSSHSPKVKEDLPH) is disordered. Over residues 337-348 (SKSSSSNNSSHS) the composition is skewed to low complexity.

This sequence belongs to the G-protein coupled receptor 1 family. In terms of tissue distribution, expressed in all tissues, but most abundantly in heart, placenta, kidney, and liver.

It localises to the cell membrane. Receptor for the lysosphingolipid sphingosine 1-phosphate (S1P). S1P is a bioactive lysophospholipid that elicits diverse physiological effect on most types of cells and tissues. When expressed in rat HTC4 hepatoma cells, is capable of mediating S1P-induced cell proliferation and suppression of apoptosis. This chain is Sphingosine 1-phosphate receptor 3, found in Homo sapiens (Human).